Reading from the N-terminus, the 184-residue chain is MKKQDISVKTVVAIGIGAAVFVILGRFVVIPTGFPNTNIETSYAFLALISAIFGPFAGLMTGLVGHAIKDFTTYGSAWWSWVICSGIIGCLYGWIGLKLNLSSGRFSRKSMIYFNIGQIIANIICWALIAPTLDILIYNEPANKVYTQGVISAVLNIISVGIIGTILLKAYASSQIKKGSLRKK.

The next 5 membrane-spanning stretches (helical) occupy residues 11–31, 44–64, 77–97, 111–131, and 148–168; these read VVAIGIGAAVFVILGRFVVIP, AFLALISAIFGPFAGLMTGLV, AWWSWVICSGIIGCLYGWIGL, MIYFNIGQIIANIICWALIAP, and QGVISAVLNIISVGIIGTILL.

This sequence belongs to the UPF0397 family.

The protein localises to the cell membrane. This chain is UPF0397 protein SAB2561c, found in Staphylococcus aureus (strain bovine RF122 / ET3-1).